Consider the following 278-residue polypeptide: Type II restriction enzyme AgeI (278 aa).

The protein belongs to the BsaWI type II restriction endonuclease family.

It catalyses the reaction Endonucleolytic cleavage of DNA to give specific double-stranded fragments with terminal 5'-phosphates.. In terms of biological role, a P subtype restriction enzyme that recognizes the double-stranded sequence 5'-ACCGGT-3' and cleaves after A-1. This is Type II restriction enzyme AgeI (ageIR) from Thalassovita gelatinovora (Thalassobius gelatinovorus).